We begin with the raw amino-acid sequence, 172 residues long: Adenine phosphoribosyltransferase (172 aa).

The protein belongs to the purine/pyrimidine phosphoribosyltransferase family. Homodimer.

It is found in the cytoplasm. It catalyses the reaction AMP + diphosphate = 5-phospho-alpha-D-ribose 1-diphosphate + adenine. It functions in the pathway purine metabolism; AMP biosynthesis via salvage pathway; AMP from adenine: step 1/1. Functionally, catalyzes a salvage reaction resulting in the formation of AMP, that is energically less costly than de novo synthesis. This Prochlorococcus marinus (strain NATL2A) protein is Adenine phosphoribosyltransferase.